The following is a 98-amino-acid chain: Small ribosomal subunit protein eS24 (98 aa).

This sequence belongs to the eukaryotic ribosomal protein eS24 family.

The polypeptide is Small ribosomal subunit protein eS24 (rps2e) (Thermoplasma acidophilum (strain ATCC 25905 / DSM 1728 / JCM 9062 / NBRC 15155 / AMRC-C165)).